We begin with the raw amino-acid sequence, 301 residues long: Phospholipase A1 VesT1.02 (301 aa).

Cystine bridges form between C87-C294, C176-C245, C181-C262, C219-C228, C240-C246, and C267-C269. S137 (nucleophile) is an active-site residue. D165 serves as the catalytic Charge relay system. Residue H230 is the Charge relay system of the active site.

This sequence belongs to the AB hydrolase superfamily. Lipase family. In terms of processing, is not glycosylated. Expressed by the venom gland.

Its subcellular location is the secreted. It carries out the reaction a 1,2-diacyl-sn-glycero-3-phosphocholine + H2O = a 2-acyl-sn-glycero-3-phosphocholine + a fatty acid + H(+). Functionally, catalyzes the hydrolysis of phosphatidylcholine with phospholipase A1 activity. Shows hemolytic activity. In Vespa tropica (Greater banded hornet), this protein is Phospholipase A1 VesT1.02.